Here is a 399-residue protein sequence, read N- to C-terminus: Putative 3'-5' exonuclease R431 (399 aa).

Positions 118 to 297 (FQIVDNWIEN…IYNELQLMTN (180 aa)) constitute a 3'-5' exonuclease domain. Residues 335-399 (ERRLKSIESK…NKYVIITRHC (65 aa)) enclose the R3H domain.

The polypeptide is Putative 3'-5' exonuclease R431 (Acanthamoeba polyphaga (Amoeba)).